The primary structure comprises 111 residues: uncharacterized protein (111 aa).

3 helical membrane passes run 4-22, 49-71, and 91-108; these read FWILMLIAITISLASQFFI, LLILFVFSLSFFPVEYLLLLFFI, and YMYHIVEVSLMFMLLIYV.

The protein localises to the cell membrane. This is an uncharacterized protein from Bacillus subtilis (strain 168).